We begin with the raw amino-acid sequence, 173 residues long: Acireductone dioxygenase 1 (173 aa).

Residues His-96, His-98, Glu-102, and His-140 each contribute to the Fe(2+) site. 4 residues coordinate Ni(2+): His-96, His-98, Glu-102, and His-140.

This sequence belongs to the acireductone dioxygenase (ARD) family. Monomer. Requires Fe(2+) as cofactor. Ni(2+) is required as a cofactor.

The catalysed reaction is 1,2-dihydroxy-5-(methylsulfanyl)pent-1-en-3-one + O2 = 3-(methylsulfanyl)propanoate + CO + formate + 2 H(+). The enzyme catalyses 1,2-dihydroxy-5-(methylsulfanyl)pent-1-en-3-one + O2 = 4-methylsulfanyl-2-oxobutanoate + formate + 2 H(+). Its pathway is amino-acid biosynthesis; L-methionine biosynthesis via salvage pathway; L-methionine from S-methyl-5-thio-alpha-D-ribose 1-phosphate: step 5/6. Functionally, catalyzes 2 different reactions between oxygen and the acireductone 1,2-dihydroxy-3-keto-5-methylthiopentene (DHK-MTPene) depending upon the metal bound in the active site. Fe-containing acireductone dioxygenase (Fe-ARD) produces formate and 2-keto-4-methylthiobutyrate (KMTB), the alpha-ketoacid precursor of methionine in the methionine recycle pathway. Ni-containing acireductone dioxygenase (Ni-ARD) produces methylthiopropionate, carbon monoxide and formate, and does not lie on the methionine recycle pathway. This is Acireductone dioxygenase 1 from Pectobacterium atrosepticum (strain SCRI 1043 / ATCC BAA-672) (Erwinia carotovora subsp. atroseptica).